Consider the following 409-residue polypeptide: MFQRWSFALCRPIVAAAQVSQQQVPPSEEPRNESGAANPPLVKEEFLRQFRERLANDKTGRNSLEGFLDLPENLPPTAASIGPLKRGKEPLPPWLKLKVPMGASRQPRFNKIRRNMREKRLATVCEEAKCPNIGECWGGGDEEGDGTATATIMVMGAHCTRGCRFCSVMTSRTPPPLDPEEPRKTADAVADMGVEYIVMTMVDRDDLADGGAAHVVRCVTAVKERNPGLLLEALVGDFHGDLKLVEMVAGSPLNVYAHNIECVERITPNVRDRRASYRQSLKVLEHVNNFTKGAMLTKSSIMLGLGEKEEEVRQTLRDLRTAGVSAVTLGQYLQPSRTRLKVSRYAHPKEFEMWEKEALDMGFLYCASGPMVRSSYRAGEYYIKNILKQRETVEAPSVSDGGNEPKDSE.

The segment at 21–41 is disordered; it reads QQQVPPSEEPRNESGAANPPL. [4Fe-4S] cluster-binding residues include Cys125, Cys130, Cys136, Cys159, Cys163, Cys166, and Ser375. The region spanning 142-364 is the Radical SAM core domain; that stretch reads EEGDGTATAT…EKEALDMGFL (223 aa).

Belongs to the radical SAM superfamily. Lipoyl synthase family. [4Fe-4S] cluster is required as a cofactor.

The protein resides in the mitochondrion. The catalysed reaction is [[Fe-S] cluster scaffold protein carrying a second [4Fe-4S](2+) cluster] + N(6)-octanoyl-L-lysyl-[protein] + 2 oxidized [2Fe-2S]-[ferredoxin] + 2 S-adenosyl-L-methionine + 4 H(+) = [[Fe-S] cluster scaffold protein] + N(6)-[(R)-dihydrolipoyl]-L-lysyl-[protein] + 4 Fe(3+) + 2 hydrogen sulfide + 2 5'-deoxyadenosine + 2 L-methionine + 2 reduced [2Fe-2S]-[ferredoxin]. It participates in protein modification; protein lipoylation via endogenous pathway; protein N(6)-(lipoyl)lysine from octanoyl-[acyl-carrier-protein]: step 2/2. In terms of biological role, catalyzes the radical-mediated insertion of two sulfur atoms into the C-6 and C-8 positions of the octanoyl moiety bound to the lipoyl domains of lipoate-dependent enzymes, thereby converting the octanoylated domains into lipoylated derivatives. The protein is Lipoyl synthase, mitochondrial of Trypanosoma brucei gambiense (strain MHOM/CI/86/DAL972).